The following is a 524-amino-acid chain: Light-independent protochlorophyllide reductase subunit B (524 aa).

Asp-36 provides a ligand contact to [4Fe-4S] cluster. Asp-290 (proton donor) is an active-site residue. Position 425–426 (425–426 (GL)) interacts with substrate.

Belongs to the ChlB/BchB/BchZ family. As to quaternary structure, protochlorophyllide reductase is composed of three subunits; ChlL, ChlN and ChlB. Forms a heterotetramer of two ChlB and two ChlN subunits. [4Fe-4S] cluster is required as a cofactor.

It carries out the reaction chlorophyllide a + oxidized 2[4Fe-4S]-[ferredoxin] + 2 ADP + 2 phosphate = protochlorophyllide a + reduced 2[4Fe-4S]-[ferredoxin] + 2 ATP + 2 H2O. Its pathway is porphyrin-containing compound metabolism; chlorophyll biosynthesis (light-independent). Functionally, component of the dark-operative protochlorophyllide reductase (DPOR) that uses Mg-ATP and reduced ferredoxin to reduce ring D of protochlorophyllide (Pchlide) to form chlorophyllide a (Chlide). This reaction is light-independent. The NB-protein (ChlN-ChlB) is the catalytic component of the complex. The protein is Light-independent protochlorophyllide reductase subunit B of Parasynechococcus marenigrum (strain WH8102).